We begin with the raw amino-acid sequence, 309 residues long: Malate dehydrogenase (309 aa).

NAD(+) is bound by residues 7–12 (GAGHVG) and D32. Substrate-binding residues include R81 and R87. Residues N94 and 117 to 119 (VSN) contribute to the NAD(+) site. Substrate-binding residues include N119 and R150. H174 serves as the catalytic Proton acceptor.

It belongs to the LDH/MDH superfamily. MDH type 3 family.

It carries out the reaction (S)-malate + NAD(+) = oxaloacetate + NADH + H(+). Functionally, catalyzes the reversible oxidation of malate to oxaloacetate. The chain is Malate dehydrogenase from Chlorobium phaeovibrioides (strain DSM 265 / 1930) (Prosthecochloris vibrioformis (strain DSM 265)).